The sequence spans 85 residues: MAHKKAGGSTKNGRDSESKRLGVKRFGGESVLAGNIIVRQRGTRFHAGDNMGIGKDHTLFALKDGKVQFDVKGPKNRKFVSIVAE.

The segment at 1 to 22 (MAHKKAGGSTKNGRDSESKRLG) is disordered.

Belongs to the bacterial ribosomal protein bL27 family.

This chain is Large ribosomal subunit protein bL27, found in Alteromonas mediterranea (strain DSM 17117 / CIP 110805 / LMG 28347 / Deep ecotype).